The chain runs to 150 residues: Large ribosomal subunit protein bL9 (150 aa).

The protein belongs to the bacterial ribosomal protein bL9 family.

Binds to the 23S rRNA. In Ruthia magnifica subsp. Calyptogena magnifica, this protein is Large ribosomal subunit protein bL9.